The chain runs to 154 residues: SsrA-binding protein (154 aa).

Belongs to the SmpB family.

The protein resides in the cytoplasm. Functionally, required for rescue of stalled ribosomes mediated by trans-translation. Binds to transfer-messenger RNA (tmRNA), required for stable association of tmRNA with ribosomes. tmRNA and SmpB together mimic tRNA shape, replacing the anticodon stem-loop with SmpB. tmRNA is encoded by the ssrA gene; the 2 termini fold to resemble tRNA(Ala) and it encodes a 'tag peptide', a short internal open reading frame. During trans-translation Ala-aminoacylated tmRNA acts like a tRNA, entering the A-site of stalled ribosomes, displacing the stalled mRNA. The ribosome then switches to translate the ORF on the tmRNA; the nascent peptide is terminated with the 'tag peptide' encoded by the tmRNA and targeted for degradation. The ribosome is freed to recommence translation, which seems to be the essential function of trans-translation. In Gluconacetobacter diazotrophicus (strain ATCC 49037 / DSM 5601 / CCUG 37298 / CIP 103539 / LMG 7603 / PAl5), this protein is SsrA-binding protein.